The sequence spans 186 residues: Peptidyl-tRNA hydrolase (186 aa).

Residue Tyr-14 participates in tRNA binding. The active-site Proton acceptor is the His-19. The tRNA site is built by Phe-64, Asn-66, and Asn-112.

It belongs to the PTH family. Monomer.

Its subcellular location is the cytoplasm. The catalysed reaction is an N-acyl-L-alpha-aminoacyl-tRNA + H2O = an N-acyl-L-amino acid + a tRNA + H(+). In terms of biological role, hydrolyzes ribosome-free peptidyl-tRNAs (with 1 or more amino acids incorporated), which drop off the ribosome during protein synthesis, or as a result of ribosome stalling. Its function is as follows. Catalyzes the release of premature peptidyl moieties from peptidyl-tRNA molecules trapped in stalled 50S ribosomal subunits, and thus maintains levels of free tRNAs and 50S ribosomes. In Mycoplasma capricolum subsp. capricolum (strain California kid / ATCC 27343 / NCTC 10154), this protein is Peptidyl-tRNA hydrolase.